Reading from the N-terminus, the 110-residue chain is Phosphoribosyl-AMP cyclohydrolase (110 aa).

Position 74 (aspartate 74) interacts with Mg(2+). Cysteine 75 is a binding site for Zn(2+). Aspartate 76 and aspartate 78 together coordinate Mg(2+). Zn(2+) is bound by residues cysteine 91 and cysteine 98.

Belongs to the PRA-CH family. As to quaternary structure, homodimer. Mg(2+) is required as a cofactor. Zn(2+) serves as cofactor.

The protein resides in the cytoplasm. The enzyme catalyses 1-(5-phospho-beta-D-ribosyl)-5'-AMP + H2O = 1-(5-phospho-beta-D-ribosyl)-5-[(5-phospho-beta-D-ribosylamino)methylideneamino]imidazole-4-carboxamide. It participates in amino-acid biosynthesis; L-histidine biosynthesis; L-histidine from 5-phospho-alpha-D-ribose 1-diphosphate: step 3/9. Its function is as follows. Catalyzes the hydrolysis of the adenine ring of phosphoribosyl-AMP. In Lacticaseibacillus paracasei (strain ATCC 334 / BCRC 17002 / CCUG 31169 / CIP 107868 / KCTC 3260 / NRRL B-441) (Lactobacillus paracasei), this protein is Phosphoribosyl-AMP cyclohydrolase.